The sequence spans 194 residues: Orotate phosphoribosyltransferase (194 aa).

Residue 117-125 (EDVVTTGLS) participates in 5-phospho-alpha-D-ribose 1-diphosphate binding. Positions 121 and 149 each coordinate orotate.

Belongs to the purine/pyrimidine phosphoribosyltransferase family. PyrE subfamily. As to quaternary structure, homodimer. It depends on Mg(2+) as a cofactor.

It catalyses the reaction orotidine 5'-phosphate + diphosphate = orotate + 5-phospho-alpha-D-ribose 1-diphosphate. It functions in the pathway pyrimidine metabolism; UMP biosynthesis via de novo pathway; UMP from orotate: step 1/2. Functionally, catalyzes the transfer of a ribosyl phosphate group from 5-phosphoribose 1-diphosphate to orotate, leading to the formation of orotidine monophosphate (OMP). The protein is Orotate phosphoribosyltransferase of Novosphingobium aromaticivorans (strain ATCC 700278 / DSM 12444 / CCUG 56034 / CIP 105152 / NBRC 16084 / F199).